We begin with the raw amino-acid sequence, 926 residues long: Glycogenin (926 aa).

UDP is bound by residues leucine 10, threonine 12, tyrosine 16, and arginine 85. Positions 10, 12, 16, 85, 94, 111, 112, 113, 145, 146, 184, 187, and 188 each coordinate UDP-alpha-D-glucose. UDP contacts are provided by aspartate 111, alanine 112, and aspartate 113. Aspartate 111 contributes to the Mn(2+) binding site. Aspartate 113 contributes to the Mn(2+) binding site. Tyrosine 219 is a glycosylation site (O-linked (Glc...) tyrosine). Residues histidine 236, glycine 239, and lysine 242 each contribute to the UDP site. Histidine 236 contributes to the Mn(2+) binding site. Glycine 239 and lysine 242 together coordinate UDP-alpha-D-glucose. Disordered regions lie at residues 379 to 432 (PSVS…PEMS), 452 to 476 (YYAH…LPKE), 547 to 584 (SIQN…PPRH), 611 to 749 (MSGK…ETVQ), and 768 to 903 (LPHA…PNTD). Positions 386 to 402 (LTPPPADAAPAPAPAPV) are enriched in pro residues. A compositionally biased stretch (polar residues) spans 404–413 (TQTEQKTAQP). Residues 456 to 469 (PESHRPATEHKEPE) show a composition bias toward basic and acidic residues. Over residues 557–566 (AHSQHQSHAT) the composition is skewed to low complexity. The span at 655 to 683 (SLHSLQSVPGTPRTQYSTFGKSPRLTNAR) shows a compositional bias: polar residues. Residues 692 to 704 (EQPEDSADGDDEN) show a composition bias toward acidic residues. Positions 733–745 (DRWAQTDRVKTVD) are enriched in basic and acidic residues. Residues 788–798 (SGNGRAGGGGQ) are compositionally biased toward gly residues. Positions 800–812 (EAQTQHQSTYYEY) are enriched in polar residues. 2 stretches are compositionally biased toward low complexity: residues 813–824 (QQQHPHSQQSRQ) and 851–875 (HAQG…NPNL).

The protein belongs to the glycosyltransferase 8 family. Glycogenin subfamily. Mn(2+) serves as cofactor.

The protein localises to the cytoplasm. The protein resides in the vacuole. The catalysed reaction is L-tyrosyl-[glycogenin] + UDP-alpha-D-glucose = alpha-D-glucosyl-L-tyrosyl-[glycogenin] + UDP + H(+). It carries out the reaction [1,4-alpha-D-glucosyl](n)-L-tyrosyl-[glycogenin] + UDP-alpha-D-glucose = [1,4-alpha-D-glucosyl](n+1)-L-tyrosyl-[glycogenin] + UDP + H(+). Self-glucosylating initiator of glycogen synthesis. It catalyzes the formation of a short alpha (1,4)-glucosyl chain covalently attached via a glucose 1-O-tyrosyl linkage to internal tyrosine residues and these chains act as primers for the elongation reaction catalyzed by glycogen synthase. This Cryptococcus neoformans var. grubii serotype A (strain H99 / ATCC 208821 / CBS 10515 / FGSC 9487) (Filobasidiella neoformans var. grubii) protein is Glycogenin.